Reading from the N-terminus, the 313-residue chain is Ribosomal RNA small subunit methyltransferase H (313 aa).

S-adenosyl-L-methionine is bound by residues 31–33 (GGH), Asp-51, Phe-77, Asp-95, and Gln-102.

Belongs to the methyltransferase superfamily. RsmH family.

It is found in the cytoplasm. The enzyme catalyses cytidine(1402) in 16S rRNA + S-adenosyl-L-methionine = N(4)-methylcytidine(1402) in 16S rRNA + S-adenosyl-L-homocysteine + H(+). Its function is as follows. Specifically methylates the N4 position of cytidine in position 1402 (C1402) of 16S rRNA. This chain is Ribosomal RNA small subunit methyltransferase H, found in Xylella fastidiosa (strain 9a5c).